Consider the following 1020-residue polypeptide: Probable beta-galactosidase B (1020 aa).

An N-terminal signal peptide occupies residues 1 to 22; the sequence is MLISKTVLSGLALGASFVGVSA. N25 carries N-linked (GlcNAc...) asparagine glycosylation. Y90 provides a ligand contact to substrate. N-linked (GlcNAc...) asparagine glycosylation is present at N111. Substrate is bound by residues N135, A136, and E137. A glycan (N-linked (GlcNAc...) asparagine) is linked at N172. Substrate is bound at residue N195. E196 (proton donor) is an active-site residue. N-linked (GlcNAc...) asparagine glycans are attached at residues N210 and N251. Y264 lines the substrate pocket. A disulfide bridge connects residues C270 and C323. N-linked (GlcNAc...) asparagine glycosylation is present at N271. The Nucleophile role is filled by E307. A substrate-binding site is contributed by Y372. Residues N410, N455, N549, N596, N625, N702, N747, N785, N819, N880, and N919 are each glycosylated (N-linked (GlcNAc...) asparagine).

Belongs to the glycosyl hydrolase 35 family.

It localises to the secreted. It carries out the reaction Hydrolysis of terminal non-reducing beta-D-galactose residues in beta-D-galactosides.. In terms of biological role, cleaves beta-linked terminal galactosyl residues from gangliosides, glycoproteins, and glycosaminoglycans. The sequence is that of Probable beta-galactosidase B (lacB) from Aspergillus flavus (strain ATCC 200026 / FGSC A1120 / IAM 13836 / NRRL 3357 / JCM 12722 / SRRC 167).